Reading from the N-terminus, the 277-residue chain is Phosphoenolpyruvate synthase regulatory protein (277 aa).

An ADP-binding site is contributed by 157–164 (GVSRCGKT).

The protein belongs to the pyruvate, phosphate/water dikinase regulatory protein family. PSRP subfamily.

It catalyses the reaction [pyruvate, water dikinase] + ADP = [pyruvate, water dikinase]-phosphate + AMP + H(+). The catalysed reaction is [pyruvate, water dikinase]-phosphate + phosphate + H(+) = [pyruvate, water dikinase] + diphosphate. In terms of biological role, bifunctional serine/threonine kinase and phosphorylase involved in the regulation of the phosphoenolpyruvate synthase (PEPS) by catalyzing its phosphorylation/dephosphorylation. This is Phosphoenolpyruvate synthase regulatory protein from Shigella boydii serotype 4 (strain Sb227).